We begin with the raw amino-acid sequence, 263 residues long: 3-methyl-2-oxobutanoate hydroxymethyltransferase (263 aa).

Residues aspartate 45 and aspartate 84 each coordinate Mg(2+). Residues 45–46 (DS), aspartate 84, and lysine 112 contribute to the 3-methyl-2-oxobutanoate site. Glutamate 114 serves as a coordination point for Mg(2+). Glutamate 181 (proton acceptor) is an active-site residue.

This sequence belongs to the PanB family. As to quaternary structure, homodecamer; pentamer of dimers. Mg(2+) serves as cofactor.

It is found in the cytoplasm. The catalysed reaction is 3-methyl-2-oxobutanoate + (6R)-5,10-methylene-5,6,7,8-tetrahydrofolate + H2O = 2-dehydropantoate + (6S)-5,6,7,8-tetrahydrofolate. It participates in cofactor biosynthesis; (R)-pantothenate biosynthesis; (R)-pantoate from 3-methyl-2-oxobutanoate: step 1/2. Catalyzes the reversible reaction in which hydroxymethyl group from 5,10-methylenetetrahydrofolate is transferred onto alpha-ketoisovalerate to form ketopantoate. The chain is 3-methyl-2-oxobutanoate hydroxymethyltransferase from Photorhabdus laumondii subsp. laumondii (strain DSM 15139 / CIP 105565 / TT01) (Photorhabdus luminescens subsp. laumondii).